The chain runs to 180 residues: Putative manganese efflux pump MntP (180 aa).

5 helical membrane-spanning segments follow: residues Val-6–Leu-26, Met-33–Trp-53, Val-63–Val-83, Gly-101–Phe-121, and Leu-130–Val-150.

This sequence belongs to the MntP (TC 9.B.29) family.

It localises to the cell membrane. Probably functions as a manganese efflux pump. The polypeptide is Putative manganese efflux pump MntP (Desulforudis audaxviator (strain MP104C)).